Consider the following 131-residue polypeptide: Small ribosomal subunit protein bS6 (131 aa).

It belongs to the bacterial ribosomal protein bS6 family.

Functionally, binds together with bS18 to 16S ribosomal RNA. This is Small ribosomal subunit protein bS6 from Borrelia hermsii (strain HS1 / DAH).